The chain runs to 347 residues: Phenylalanine--tRNA ligase alpha subunit (347 aa).

Position 261 (Glu261) interacts with Mg(2+).

The protein belongs to the class-II aminoacyl-tRNA synthetase family. Phe-tRNA synthetase alpha subunit type 1 subfamily. Tetramer of two alpha and two beta subunits. Requires Mg(2+) as cofactor.

The protein localises to the cytoplasm. The enzyme catalyses tRNA(Phe) + L-phenylalanine + ATP = L-phenylalanyl-tRNA(Phe) + AMP + diphosphate + H(+). The protein is Phenylalanine--tRNA ligase alpha subunit of Streptococcus mutans serotype c (strain ATCC 700610 / UA159).